The chain runs to 93 residues: Cell division topological specificity factor (93 aa).

It belongs to the MinE family.

In terms of biological role, prevents the cell division inhibition by proteins MinC and MinD at internal division sites while permitting inhibition at polar sites. This ensures cell division at the proper site by restricting the formation of a division septum at the midpoint of the long axis of the cell. In Alkaliphilus oremlandii (strain OhILAs) (Clostridium oremlandii (strain OhILAs)), this protein is Cell division topological specificity factor.